A 274-amino-acid chain; its full sequence is Basic leucine zipper transcriptional factor ATF-like 2 (274 aa).

Disordered stretches follow at residues 1-47, 128-151, and 187-229; these read MHLC…ALHQ, GSCYPAQPLSPGPQPHDSPSLLQC, and GSSS…PSSA. The bZIP domain occupies 17 to 80; that stretch reads EQQRQLKKQK…AWWSRTLHVH (64 aa). The tract at residues 20 to 41 is basic motif; sequence RQLKKQKNRAAAQRSRQKHTDK. A compositionally biased stretch (basic and acidic residues) spans 37 to 47; sequence KHTDKADALHQ. Positions 45–66 are leucine-zipper; the sequence is LHQQHESLEKDNLALRKEIQSL. Residues 187-196 are compositionally biased toward low complexity; it reads GSSSKLSALQ.

It belongs to the bZIP family. In terms of assembly, heterodimer; heterodimerizes with JUN family proteins.

It is found in the nucleus. Functionally, AP-1 family transcription factor that controls the differentiation of lineage-specific cells in the immune system. Following infection, participates in the differentiation of CD8(+) thymic conventional dendritic cells in the immune system. Acts via the formation of a heterodimer with JUN family proteins that recognizes and binds DNA sequence 5'-TGA[CG]TCA-3' and regulates expression of target genes. Selectively suppresses CCN1 transcription and hence blocks the downstream cell proliferation signals produced by CCN1 and inhibits CCN1-induced anchorage-independent growth and invasion in several cancer types, such as breast cancer, malignant glioma and metastatic melanoma. Possibly acts by interfering with AP-1 binding to CCN1 promoter. The sequence is that of Basic leucine zipper transcriptional factor ATF-like 2 (BATF2) from Homo sapiens (Human).